Consider the following 641-residue polypeptide: Sodium-dependent nutrient amino acid transporter 1 (641 aa).

The span at 1–21 (MELKNIEQQPQLQNGNGTATE) shows a compositional bias: polar residues. Residues 1–37 (MELKNIEQQPQLQNGNGTATENNEKGEQKPTEGGERT) form a disordered region. Topologically, residues 1-38 (MELKNIEQQPQLQNGNGTATENNEKGEQKPTEGGERTN) are cytoplasmic. Basic and acidic residues predominate over residues 22–35 (NNEKGEQKPTEGGE). Transmembrane regions (helical) follow at residues 39–59 (WGNG…LGNV), 72–92 (GAFL…MYYL), and 125–145 (TVCI…YLFV). Residues Asn181, Asn190, and Asn198 are each glycosylated (N-linked (GlcNAc...) asparagine). The next 9 membrane-spanning stretches (helical) occupy residues 229–249 (PDWK…LVIM), 258–278 (AAYF…GRAV), 307–327 (AVVQ…MFAS), 341–361 (IVTT…FAIL), 401–421 (LFSV…IVAL), 441–461 (VALV…TPGG), 474–494 (TYVV…IYGL), 516–536 (CWSF…MATI), and 552–572 (IAGW…GIWY).

It belongs to the sodium:neurotransmitter symporter (SNF) (TC 2.A.22) family.

It localises to the membrane. In terms of biological role, unusual broad substrate spectrum amino acid:sodium cotransporter that promotes absorption of the D isomers of essential amino acids. Neutral amino acids are the preferred substrates, especially methionine and phenylalanine. This Drosophila willistoni (Fruit fly) protein is Sodium-dependent nutrient amino acid transporter 1.